A 217-amino-acid polypeptide reads, in one-letter code: Phosphoenolpyruvate guanylyltransferase (217 aa).

Residues Thr150, Gly165, and Ser168 each contribute to the phosphoenolpyruvate site.

The protein belongs to the CofC family.

The enzyme catalyses phosphoenolpyruvate + GTP + H(+) = enolpyruvoyl-2-diphospho-5'-guanosine + diphosphate. The protein operates within cofactor biosynthesis; coenzyme F420 biosynthesis. Functionally, guanylyltransferase that catalyzes the activation of phosphoenolpyruvate (PEP) as enolpyruvoyl-2-diphospho-5'-guanosine, via the condensation of PEP with GTP. It is involved in the biosynthesis of coenzyme F420, a hydride carrier cofactor. This chain is Phosphoenolpyruvate guanylyltransferase, found in Mycobacterium marinum (strain ATCC BAA-535 / M).